The chain runs to 244 residues: tRNA (guanine-N(1)-)-methyltransferase (244 aa).

S-adenosyl-L-methionine is bound by residues Gly-111 and 130–135 (IGDYVL).

It belongs to the RNA methyltransferase TrmD family. In terms of assembly, homodimer.

It is found in the cytoplasm. The catalysed reaction is guanosine(37) in tRNA + S-adenosyl-L-methionine = N(1)-methylguanosine(37) in tRNA + S-adenosyl-L-homocysteine + H(+). Its function is as follows. Specifically methylates guanosine-37 in various tRNAs. The protein is tRNA (guanine-N(1)-)-methyltransferase of Phytoplasma australiense.